The sequence spans 342 residues: Subtilisin-like serine protease Rho m 2.0101 (342 aa).

A propeptide spans 1–30 (removed in mature form); the sequence is TMELLEDLIEQVRQLPMVNFIEKNSLVHAN. Residues 1–30 enclose the Inhibitor I9 domain; sequence TMELLEDLIEQVRQLPMVNFIEKNSLVHAN. The region spanning 39–342 is the Peptidase S8 domain; that stretch reads PWGLARISHR…GQNLTKFWGH (304 aa). Residues Asp-75 and His-107 each act as charge relay system in the active site. 2 N-linked (GlcNAc...) asparagine glycosylation sites follow: Asn-137 and Asn-171. Residue Ser-267 is the Charge relay system of the active site. N-linked (GlcNAc...) asparagine glycosylation occurs at Asn-335.

This sequence belongs to the peptidase S8 family.

Its function is as follows. Serine protease. The polypeptide is Subtilisin-like serine protease Rho m 2.0101 (Rhodotorula mucilaginosa (Yeast)).